The primary structure comprises 111 residues: MKVAAAFLLAVLGGNANPSADNIKDIIGAVGADVDGESIELLLKEVSGKDIAELIASGREKLASVPSGGGVAVSAAPSSGGGGAAAPAEKKEAKKEEKEESDDDMGFSLFE.

Residues 63–111 (ASVPSGGGVAVSAAPSSGGGGAAAPAEKKEAKKEEKEESDDDMGFSLFE) are disordered. The span at 88–98 (AEKKEAKKEEK) shows a compositional bias: basic and acidic residues. Phosphoserine is present on Ser-101.

The protein belongs to the eukaryotic ribosomal protein P1/P2 family. In terms of assembly, P1 and P2 exist as dimers at the large ribosomal subunit.

Its function is as follows. Plays an important role in the elongation step of protein synthesis. The polypeptide is Large ribosomal subunit protein P2w (RPP2D) (Arabidopsis thaliana (Mouse-ear cress)).